Reading from the N-terminus, the 89-residue chain is Small ribosomal subunit protein uS15 (89 aa).

Belongs to the universal ribosomal protein uS15 family. In terms of assembly, part of the 30S ribosomal subunit. Forms a bridge to the 50S subunit in the 70S ribosome, contacting the 23S rRNA.

In terms of biological role, one of the primary rRNA binding proteins, it binds directly to 16S rRNA where it helps nucleate assembly of the platform of the 30S subunit by binding and bridging several RNA helices of the 16S rRNA. Functionally, forms an intersubunit bridge (bridge B4) with the 23S rRNA of the 50S subunit in the ribosome. This Limosilactobacillus reuteri (strain DSM 20016) (Lactobacillus reuteri) protein is Small ribosomal subunit protein uS15.